The following is a 177-amino-acid chain: Coatomer subunit zeta-3 (177 aa).

Belongs to the adaptor complexes small subunit family. Oligomeric complex that consists of at least the alpha, beta, beta', gamma, delta, epsilon and zeta subunits.

It is found in the cytoplasm. The protein localises to the golgi apparatus membrane. It localises to the cytoplasmic vesicle. Its subcellular location is the COPI-coated vesicle membrane. Its function is as follows. The coatomer is a cytosolic protein complex that binds to dilysine motifs and reversibly associates with Golgi non-clathrin-coated vesicles, which further mediate biosynthetic protein transport from the ER, via the Golgi up to the trans Golgi network. Coatomer complex is required for budding from Golgi membranes, and is essential for the retrograde Golgi-to-ER transport of dilysine-tagged proteins. The zeta subunit may be involved in regulating the coat assembly and, hence, the rate of biosynthetic protein transport due to its association-dissociation properties with the coatomer complex. This is Coatomer subunit zeta-3 from Oryza sativa subsp. japonica (Rice).